A 239-amino-acid chain; its full sequence is 2,3,4,5-tetrahydropyridine-2,6-dicarboxylate N-acetyltransferase (239 aa).

Belongs to the transferase hexapeptide repeat family. DapH subfamily.

It carries out the reaction (S)-2,3,4,5-tetrahydrodipicolinate + acetyl-CoA + H2O = L-2-acetamido-6-oxoheptanedioate + CoA. The protein operates within amino-acid biosynthesis; L-lysine biosynthesis via DAP pathway; LL-2,6-diaminopimelate from (S)-tetrahydrodipicolinate (acetylase route): step 1/3. Functionally, catalyzes the transfer of an acetyl group from acetyl-CoA to tetrahydrodipicolinate. This Staphylococcus saprophyticus subsp. saprophyticus (strain ATCC 15305 / DSM 20229 / NCIMB 8711 / NCTC 7292 / S-41) protein is 2,3,4,5-tetrahydropyridine-2,6-dicarboxylate N-acetyltransferase.